Consider the following 122-residue polypeptide: Ribosomal silencing factor RsfS (122 aa).

The protein belongs to the Iojap/RsfS family. In terms of assembly, interacts with ribosomal protein uL14 (rplN).

It localises to the cytoplasm. In terms of biological role, functions as a ribosomal silencing factor. Interacts with ribosomal protein uL14 (rplN), blocking formation of intersubunit bridge B8. Prevents association of the 30S and 50S ribosomal subunits and the formation of functional ribosomes, thus repressing translation. The polypeptide is Ribosomal silencing factor RsfS (Chromobacterium violaceum (strain ATCC 12472 / DSM 30191 / JCM 1249 / CCUG 213 / NBRC 12614 / NCIMB 9131 / NCTC 9757 / MK)).